Consider the following 479-residue polypeptide: Spindly-like protein spdl-1 (479 aa).

Coiled-coil stretches lie at residues 4–180 (DEEK…EGEL), 210–250 (EEDL…RFNV), and 321–357 (LMKD…KCAH).

In terms of assembly, interacts with Zwilch homolog zwl-1, a component of the RZZ complex. Interacts with mdf-1 and mdf-2.

It localises to the chromosome. It is found in the centromere. Its subcellular location is the kinetochore. The protein resides in the cytoplasm. The protein localises to the cytoskeleton. It localises to the spindle pole. Its function is as follows. Transient kinetochore component required for chromosome and spindle pole alignment and chromosome segregation during mitosis. Functions downstream of the RZZ complex to mediate kinetochore-microtubule attachments and nuclear envelope breakdown during cell division. Required for kinetochore assembly and localizes the checkpoint proteins mdf-1 and mdf-2, dynein and dynactin to unattached kinetochores. Dynein is believed to control the initial lateral interaction between the kinetochore and spindle microtubules and to facilitate the subsequent formation of end-on kinetochore-microtubule attachments mediated by the NDC80 complex. Required for embryonic development. This chain is Spindly-like protein spdl-1, found in Caenorhabditis elegans.